The sequence spans 386 residues: 5-hydroxytryptamine receptor 1B (386 aa).

The interval 1–25 is disordered; the sequence is MEEPGARCAPPPPAGSQTQTPSSNL. Residues 1-42 lie on the Extracellular side of the membrane; that stretch reads MEEPGARCAPPPPAGSQTQTPSSNLSHNCSADSYIYQDSIAL. Positions 16-25 are enriched in polar residues; sequence SQTQTPSSNL. N-linked (GlcNAc...) asparagine glycans are attached at residues Asn24 and Asn28. The helical transmembrane segment at 43–68 threads the bilayer; the sequence is PWKVLLVALLALITLATTLSNAFVIA. Over 69–82 the chain is Cytoplasmic; that stretch reads TVYRTRKLHTPANY. A helical transmembrane segment spans residues 83–107; the sequence is LIASLAVTDLLVSILVMPISTMYTV. The Extracellular portion of the chain corresponds to 108–115; sequence TGRWTLGQ. A helical transmembrane segment spans residues 116–141; sequence VVCDFWLSSDITCCTASIMHLCVIAL. Cysteines 118 and 195 form a disulfide. 2 residues coordinate ergotamine: Asp125 and Thr130. Residues 142–144 carry the DRY motif; important for ligand-induced conformation changes and signaling motif; it reads DRY. Residues 142 to 161 are Cytoplasmic-facing; the sequence is DRYWAITDAVEYSAKRTPRR. The helical transmembrane segment at 162 to 180 threads the bilayer; that stretch reads AAVMIALVWVFSISISLPR. The Extracellular portion of the chain corresponds to 181–201; that stretch reads FFWRQAKAEEEVLDCLVNTDH. Residue Val197 participates in ergotamine binding. Residues 202–225 traverse the membrane as a helical segment; the sequence is VLYTVYSTVGAFYLPTLLLIALYG. Topologically, residues 226–311 are cytoplasmic; it reads RIYVEARSRI…AARERKATKT (86 aa). The tract at residues 253–272 is disordered; sequence ISDSPGSTSSVTSINSRVPD. The segment covering 254–268 has biased composition (low complexity); it reads SDSPGSTSSVTSINS. The chain crosses the membrane as a helical span at residues 312–333; it reads LGIILGAFIVCWLPFFIISLVM. Residues 334 to 343 are Extracellular-facing; sequence PICKDACWFH. Residues 344 to 366 traverse the membrane as a helical segment; sequence MAIFDFFNWLGYLNSLINPIIYT. Residues 361-365 carry the NPxxY motif; important for ligand-induced conformation changes and signaling motif; that stretch reads NPIIY. The Cytoplasmic segment spans residues 367–386; the sequence is MPNEDFKQAFHKLIRFKCTG. Cys384 carries the S-palmitoyl cysteine lipid modification.

This sequence belongs to the G-protein coupled receptor 1 family. Homodimer. Heterodimer with HTR1D. Phosphorylated. Desensitization of the receptor may be mediated by its phosphorylation. In terms of processing, palmitoylated.

Its subcellular location is the cell membrane. Its function is as follows. G-protein coupled receptor for 5-hydroxytryptamine (serotonin). Also functions as a receptor for ergot alkaloid derivatives, various anxiolytic and antidepressant drugs and other psychoactive substances, such as lysergic acid diethylamide (LSD). Ligand binding causes a conformation change that triggers signaling via guanine nucleotide-binding proteins (G proteins) and modulates the activity of downstream effectors, such as adenylate cyclase. HTR1B is coupled to G(i)/G(o) G alpha proteins and mediates inhibitory neurotransmission by inhibiting adenylate cyclase activity. Arrestin family members inhibit signaling via G proteins and mediate activation of alternative signaling pathways. Regulates the release of 5-hydroxytryptamine, dopamine and acetylcholine in the brain, and thereby affects neural activity, nociceptive processing, pain perception, mood and behavior. Besides, plays a role in vasoconstriction of cerebral arteries. The polypeptide is 5-hydroxytryptamine receptor 1B (HTR1B) (Spalax ehrenbergi (Middle East blind mole rat)).